The chain runs to 502 residues: MKVRTRIAPSPTGFPHVGTAYIALFNMCFAKQHGGEFILRIEDTDQLRSTPESEKMILDSLRWLGLNWSEGPDVGGPHAPYRQSERMGIYKQYALELVEKGHAFYCFATAEELDQMRAEQQARGETPKYDGRGLKLSQEEVARRLEAGEPHVIRMKVPEEGVCKFNDLLRGEVEIPWAQVDMQVLLKTDGLPTYHLANVVDDHLMEITHVLRGEEWLPSAPKHQLLYQYFGWEMPTLCHMPLLRNPDKSKLSKRKNPTSINYYRDIGVLPEALLNYLGRMGWSMPDEREVFTLQDMMDNFDIQRVSLGGPIFDVEKLNWLNGQWIKGLTPGQLLDRLLTWKSDRSTLEDIAAAIQPRINLLSEAVNWAGFYFNHMPQITAEMFESKKLTQEQVRQSLQFAIWRLESQFTWNNDTVGQTLMDLANQMGIKLRDFMPTFFIAIAGSTSSTPVMQSMVTLGPDLTFARLRHALEIVGAPSKKEVKNWEKLNESLKLPKNEATSEA.

Positions 9 to 19 (PSPTGFPHVGT) match the 'HIGH' region motif. Residues 250 to 254 (KLSKR) carry the 'KMSKS' region motif. Residue Lys253 participates in ATP binding.

The protein belongs to the class-I aminoacyl-tRNA synthetase family. Glutamate--tRNA ligase type 1 subfamily. As to quaternary structure, monomer.

It localises to the cytoplasm. The catalysed reaction is tRNA(Glu) + L-glutamate + ATP = L-glutamyl-tRNA(Glu) + AMP + diphosphate. Its function is as follows. Catalyzes the attachment of glutamate to tRNA(Glu) in a two-step reaction: glutamate is first activated by ATP to form Glu-AMP and then transferred to the acceptor end of tRNA(Glu). This chain is Glutamate--tRNA ligase, found in Acinetobacter baumannii (strain SDF).